Here is a 446-residue protein sequence, read N- to C-terminus: Protein adenylyltransferase FICD (446 aa).

The Cytoplasmic segment spans residues 1–18 (MAVTECEWASLGSRIGLR). A helical; Signal-anchor for type II membrane protein transmembrane segment spans residues 19–39 (AALVLLSGSLLVVLFPLSGLE). The Lumenal portion of the chain corresponds to 40-446 (HQYRTALNIL…ECKQTITIKT (407 aa)). 2 TPR repeats span residues 94–127 (AKAALNQALEMKRQGKKEKAHKLLHHALKMDPDH) and 128–161 (VDALNELGILLEEEKDIIQADYLYSKALTISPHN). Positions 218 to 223 (TVAIEG) match the Inhibitory (S/T)XXXE(G/N) motif motif. An ATP-binding site is contributed by glutamate 222. Asparagine 263 is a glycosylation site (N-linked (GlcNAc...) asparagine). Residues 273–408 (VTIDNILEIH…VRPFIRFIAK (136 aa)) form the Fido domain. 304 to 307 (VGHH) provides a ligand contact to ATP. The active site involves histidine 351. Residues 355–362 (DGNGRTSR), 387–388 (YY), and asparagine 395 each bind ATP.

Belongs to the fic family. In terms of assembly, homodimer. Mg(2+) serves as cofactor. Requires Mn(2+) as cofactor.

The protein resides in the endoplasmic reticulum membrane. The catalysed reaction is L-tyrosyl-[protein] + ATP = O-(5'-adenylyl)-L-tyrosyl-[protein] + diphosphate. The enzyme catalyses 3-O-(5'-adenylyl)-L-threonyl-[protein] + H2O = L-threonyl-[protein] + AMP + H(+). It catalyses the reaction L-threonyl-[protein] + ATP = 3-O-(5'-adenylyl)-L-threonyl-[protein] + diphosphate. With respect to regulation, the side chain of Glu-222 determines which of the two opposing activities (AMPylase or de-AMPylase) will take place. In response to endoplasmic reticulum stress, mediates de-AMPylase activity. Adenylyltransferase activity is inhibited by the inhibitory helix present at the N-terminus: Glu-222 binds ATP and competes with ATP-binding at Arg-362, thereby preventing adenylyltransferase activity. In unstressed cells, disengagement of Glu-222 promotes adenylyltransferase activity. Activation dissociates ATP-binding from Glu-222, allowing ordered binding of the entire ATP moiety with the alpha-phosphate in an orientation that is productive for accepting an incoming target hydroxyl side chain. Functionally, protein that can both mediate the addition of adenosine 5'-monophosphate (AMP) to specific residues of target proteins (AMPylation), and the removal of the same modification from target proteins (de-AMPylation), depending on the context. The side chain of Glu-222 determines which of the two opposing activities (AMPylase or de-AMPylase) will take place. Acts as a key regulator of the ERN1/IRE1-mediated unfolded protein response (UPR) by mediating AMPylation or de-AMPylation of HSPA5/BiP. In unstressed cells, acts as an adenylyltransferase by mediating AMPylation of HSPA5/BiP at 'Thr-518', thereby inactivating it. In response to endoplasmic reticulum stress, acts as a phosphodiesterase by mediating removal of ATP (de-AMPylation) from HSPA5/BiP at 'Thr-518', leading to restore HSPA5/BiP activity. This Xenopus tropicalis (Western clawed frog) protein is Protein adenylyltransferase FICD.